The sequence spans 489 residues: Glycogen synthase (489 aa).

Position 20 (arginine 20) interacts with ADP-alpha-D-glucose.

The protein belongs to the glycosyltransferase 1 family. Bacterial/plant glycogen synthase subfamily.

It carries out the reaction [(1-&gt;4)-alpha-D-glucosyl](n) + ADP-alpha-D-glucose = [(1-&gt;4)-alpha-D-glucosyl](n+1) + ADP + H(+). The protein operates within glycan biosynthesis; glycogen biosynthesis. Synthesizes alpha-1,4-glucan chains using ADP-glucose. This Chlorobium luteolum (strain DSM 273 / BCRC 81028 / 2530) (Pelodictyon luteolum) protein is Glycogen synthase.